The primary structure comprises 201 residues: Holliday junction branch migration complex subunit RuvA (201 aa).

The interval 1-63 (MYDYIKGTVT…EDNISLFGFQ (63 aa)) is domain I. Residues 64–142 (TTEERYLFKK…DVVASEIVYV (79 aa)) form a domain II region. Residues 143–153 (APENDMVAGLS) form a flexible linker region. Residues 153 to 201 (SPQLEEAVLALEALGYSTRELKKVIPKLAKEEDLTSDAYIKLALQLMTK) are domain III.

This sequence belongs to the RuvA family. Homotetramer. Forms an RuvA(8)-RuvB(12)-Holliday junction (HJ) complex. HJ DNA is sandwiched between 2 RuvA tetramers; dsDNA enters through RuvA and exits via RuvB. An RuvB hexamer assembles on each DNA strand where it exits the tetramer. Each RuvB hexamer is contacted by two RuvA subunits (via domain III) on 2 adjacent RuvB subunits; this complex drives branch migration. In the full resolvosome a probable DNA-RuvA(4)-RuvB(12)-RuvC(2) complex forms which resolves the HJ.

The protein localises to the cytoplasm. Functionally, the RuvA-RuvB-RuvC complex processes Holliday junction (HJ) DNA during genetic recombination and DNA repair, while the RuvA-RuvB complex plays an important role in the rescue of blocked DNA replication forks via replication fork reversal (RFR). RuvA specifically binds to HJ cruciform DNA, conferring on it an open structure. The RuvB hexamer acts as an ATP-dependent pump, pulling dsDNA into and through the RuvAB complex. HJ branch migration allows RuvC to scan DNA until it finds its consensus sequence, where it cleaves and resolves the cruciform DNA. This chain is Holliday junction branch migration complex subunit RuvA, found in Listeria monocytogenes serotype 4a (strain HCC23).